Consider the following 141-residue polypeptide: Hemoglobin subunit alpha-D (141 aa).

Residues 1 to 141 (MLTAEDKKLI…VSAVLAEKYR (141 aa)) form the Globin domain. Heme b-binding residues include H58 and H87.

This sequence belongs to the globin family. Heterotetramer of two alpha-D chains and two beta chains. In terms of tissue distribution, red blood cells.

Functionally, involved in oxygen transport from the lung to the various peripheral tissues. In Meleagris gallopavo (Wild turkey), this protein is Hemoglobin subunit alpha-D (HBAD).